The sequence spans 274 residues: Large ribosomal subunit protein uL2 (274 aa).

Disordered regions lie at residues 28–54 (APYA…TRHI) and 223–265 (VAMN…KRTD). Residues 39-48 (KSGGRNNNGR) show a composition bias toward low complexity.

The protein belongs to the universal ribosomal protein uL2 family. In terms of assembly, part of the 50S ribosomal subunit. Forms a bridge to the 30S subunit in the 70S ribosome.

In terms of biological role, one of the primary rRNA binding proteins. Required for association of the 30S and 50S subunits to form the 70S ribosome, for tRNA binding and peptide bond formation. It has been suggested to have peptidyltransferase activity; this is somewhat controversial. Makes several contacts with the 16S rRNA in the 70S ribosome. This chain is Large ribosomal subunit protein uL2, found in Alteromonas mediterranea (strain DSM 17117 / CIP 110805 / LMG 28347 / Deep ecotype).